The sequence spans 362 residues: Biotin synthase (362 aa).

The Radical SAM core domain occupies 46–273; the sequence is NEVQVSTLLS…ASHVRLSAGR (228 aa). Cys-61, Cys-65, and Cys-68 together coordinate [4Fe-4S] cluster. Cys-105, Cys-136, Cys-196, and Arg-268 together coordinate [2Fe-2S] cluster.

This sequence belongs to the radical SAM superfamily. Biotin synthase family. In terms of assembly, homodimer. The cofactor is [4Fe-4S] cluster. It depends on [2Fe-2S] cluster as a cofactor.

The catalysed reaction is (4R,5S)-dethiobiotin + (sulfur carrier)-SH + 2 reduced [2Fe-2S]-[ferredoxin] + 2 S-adenosyl-L-methionine = (sulfur carrier)-H + biotin + 2 5'-deoxyadenosine + 2 L-methionine + 2 oxidized [2Fe-2S]-[ferredoxin]. The protein operates within cofactor biosynthesis; biotin biosynthesis; biotin from 7,8-diaminononanoate: step 2/2. Its function is as follows. Catalyzes the conversion of dethiobiotin (DTB) to biotin by the insertion of a sulfur atom into dethiobiotin via a radical-based mechanism. This chain is Biotin synthase, found in Aeromonas salmonicida (strain A449).